The primary structure comprises 450 residues: Aspartyl/glutamyl-tRNA(Asn/Gln) amidotransferase subunit B (450 aa).

The protein belongs to the GatB/GatE family. GatB subfamily. As to quaternary structure, heterotrimer of A, B and C subunits.

The enzyme catalyses L-glutamyl-tRNA(Gln) + L-glutamine + ATP + H2O = L-glutaminyl-tRNA(Gln) + L-glutamate + ADP + phosphate + H(+). It catalyses the reaction L-aspartyl-tRNA(Asn) + L-glutamine + ATP + H2O = L-asparaginyl-tRNA(Asn) + L-glutamate + ADP + phosphate + 2 H(+). Functionally, allows the formation of correctly charged Asn-tRNA(Asn) or Gln-tRNA(Gln) through the transamidation of misacylated Asp-tRNA(Asn) or Glu-tRNA(Gln) in organisms which lack either or both of asparaginyl-tRNA or glutaminyl-tRNA synthetases. The reaction takes place in the presence of glutamine and ATP through an activated phospho-Asp-tRNA(Asn) or phospho-Glu-tRNA(Gln). This Methanobrevibacter smithii (strain ATCC 35061 / DSM 861 / OCM 144 / PS) protein is Aspartyl/glutamyl-tRNA(Asn/Gln) amidotransferase subunit B.